Consider the following 340-residue polypeptide: Ketol-acid reductoisomerase (NADP(+)) (340 aa).

Residues 3–182 (VQMEYEKDVK…GAARVGLLET (180 aa)) form the KARI N-terminal Rossmann domain. NADP(+) contacts are provided by residues 26-29 (YGSQ), arginine 49, serine 53, and 83-86 (DEIQ). Histidine 108 is an active-site residue. Glycine 134 contacts NADP(+). Positions 183–328 (TYKEETEEDL…AELRKAMPFV (146 aa)) constitute a KARI C-terminal knotted domain. Residues aspartate 191, glutamate 195, glutamate 227, and glutamate 231 each coordinate Mg(2+). Serine 252 contacts substrate.

Belongs to the ketol-acid reductoisomerase family. Mg(2+) is required as a cofactor.

It catalyses the reaction (2R)-2,3-dihydroxy-3-methylbutanoate + NADP(+) = (2S)-2-acetolactate + NADPH + H(+). The enzyme catalyses (2R,3R)-2,3-dihydroxy-3-methylpentanoate + NADP(+) = (S)-2-ethyl-2-hydroxy-3-oxobutanoate + NADPH + H(+). The protein operates within amino-acid biosynthesis; L-isoleucine biosynthesis; L-isoleucine from 2-oxobutanoate: step 2/4. It participates in amino-acid biosynthesis; L-valine biosynthesis; L-valine from pyruvate: step 2/4. Functionally, involved in the biosynthesis of branched-chain amino acids (BCAA). Catalyzes an alkyl-migration followed by a ketol-acid reduction of (S)-2-acetolactate (S2AL) to yield (R)-2,3-dihydroxy-isovalerate. In the isomerase reaction, S2AL is rearranged via a Mg-dependent methyl migration to produce 3-hydroxy-3-methyl-2-ketobutyrate (HMKB). In the reductase reaction, this 2-ketoacid undergoes a metal-dependent reduction by NADPH to yield (R)-2,3-dihydroxy-isovalerate. The chain is Ketol-acid reductoisomerase (NADP(+)) from Streptococcus gordonii (strain Challis / ATCC 35105 / BCRC 15272 / CH1 / DL1 / V288).